The primary structure comprises 346 residues: Ketol-acid reductoisomerase (NADP(+)) (346 aa).

Positions 1-141 (KKNSILKKNQ…GAHHAGVLES (141 aa)) constitute a KARI N-terminal Rossmann domain. NADP(+)-binding positions include Ser-11 and 41–43 (DKQ). The active site involves His-65. Gly-91 lines the NADP(+) pocket. 2 consecutive KARI C-terminal knotted domains span residues 142 to 286 (SFVA…PEQE) and 287 to 346 (YYDH…NKVI). Mg(2+)-binding residues include Asp-150, Glu-154, Glu-322, and Glu-326.

It belongs to the ketol-acid reductoisomerase family. Mg(2+) serves as cofactor.

The catalysed reaction is (2R)-2,3-dihydroxy-3-methylbutanoate + NADP(+) = (2S)-2-acetolactate + NADPH + H(+). It carries out the reaction (2R,3R)-2,3-dihydroxy-3-methylpentanoate + NADP(+) = (S)-2-ethyl-2-hydroxy-3-oxobutanoate + NADPH + H(+). Its pathway is amino-acid biosynthesis; L-isoleucine biosynthesis; L-isoleucine from 2-oxobutanoate: step 2/4. It participates in amino-acid biosynthesis; L-valine biosynthesis; L-valine from pyruvate: step 2/4. In terms of biological role, involved in the biosynthesis of branched-chain amino acids (BCAA). Catalyzes an alkyl-migration followed by a ketol-acid reduction of (S)-2-acetolactate (S2AL) to yield (R)-2,3-dihydroxy-isovalerate. In the isomerase reaction, S2AL is rearranged via a Mg-dependent methyl migration to produce 3-hydroxy-3-methyl-2-ketobutyrate (HMKB). In the reductase reaction, this 2-ketoacid undergoes a metal-dependent reduction by NADPH to yield (R)-2,3-dihydroxy-isovalerate. The sequence is that of Ketol-acid reductoisomerase (NADP(+)) (ilvC) from Buchnera aphidicola subsp. Uroleucon rurale.